A 489-amino-acid polypeptide reads, in one-letter code: MGAVAINRKRSDESFNFINQQSTNPLRNSPYFQASKKRRFSFAMSEDSGKPASSNPTISRISRYPDAKAPLRREIHAPSRGILRYGKAKSNDYCEKDANFFVRKYDDAKRSALEALRFVNKGKDFVDLGDEVEKEEVVSDDSSVQAIEVIDCDDDEEKKNLQPSFSSGVTDVKKGENFRVEDTSMMLDSLSLDRDVDNDASSLEAYRKLMQSAEKRNSKLEALGFEIVLNEKKLSLLRQSRPKTVEKRVEVPREPFIPLTEDEEAEVYRAFSGRNRRKVLATHENSNIDITGEVLQCLTPSAWLNDEVINVYLELLKERETREPKKYLKCHYFNTFFYKKLVSDSGYNFKAVRRWTTQRKLGYALIDCDMIFVPIHRGVHWTLAVINNRESKLLYLDSLNGVDPMILNALAKYMGDEANEKSGKKIDANSWDMEFVEDLPQQKNGYDCGMFMLKYIDFFSRGLGLCFSQEHMPYFRLRTAKEILRLRAD.

The disordered stretch occupies residues 43–66 (AMSEDSGKPASSNPTISRISRYPD). Over residues 51–60 (PASSNPTISR) the composition is skewed to polar residues. Residues 200 to 223 (ASSLEAYRKLMQSAEKRNSKLEAL) are a coiled coil. Catalysis depends on residues His380, Asp397, and Cys448.

The protein belongs to the peptidase C48 family. As to quaternary structure, interacts with NUA (via N-terminus). Interacts with KIN10. In terms of tissue distribution, expressed in seedlings, leaves, shoots, flowers and roots.

The protein localises to the nucleus membrane. It carries out the reaction Hydrolysis of the alpha-linked peptide bond in the sequence Gly-Gly-|-Ala-Thr-Tyr at the C-terminal end of the small ubiquitin-like modifier (SUMO) propeptide, Smt3, leading to the mature form of the protein. A second reaction involves the cleavage of an epsilon-linked peptide bond between the C-terminal glycine of the mature SUMO and the lysine epsilon-amino group of the target protein.. With respect to regulation, inhibited by thiol reagent and N-ethylmaleimide, but not by ubiquitin aldehyde, pepstatin A or benzamidine HCl. In terms of biological role, protease that catalyzes two essential functions in the SUMO pathway: processing of full-length SUMOs to their mature forms and deconjugation of SUMO from targeted proteins. Cleaves precursors of SUM1 and SUM2, but not of SUM3 or SUM5. Able to release SUM1 and SUM2 from conjugates, but unable to cleave SUM3. Acts predominantly as an isopeptidase, cleaving SUMO-conjugated proteins better than SUMO peptides. Plays an important role in the control of flowering time. In Arabidopsis thaliana (Mouse-ear cress), this protein is Ubiquitin-like-specific protease ESD4 (ESD4).